The following is a 549-amino-acid chain: Cytoplasmic trehalase (549 aa).

Substrate contacts are provided by residues Arg168, 175–176 (WD), Asn212, 221–223 (RSQ), 292–294 (RDE), and Gly324. Active-site proton donor/acceptor residues include Asp326 and Glu509. Substrate is bound at residue Glu525.

Belongs to the glycosyl hydrolase 37 family. Monomer.

Its subcellular location is the cytoplasm. The catalysed reaction is alpha,alpha-trehalose + H2O = alpha-D-glucose + beta-D-glucose. It participates in glycan degradation; trehalose degradation; D-glucose from alpha,alpha-trehalose: step 1/1. In terms of biological role, hydrolyzes trehalose to glucose. Could be involved, in cells returning to low osmolarity conditions, in the utilization of the accumulated cytoplasmic trehalose, which was synthesized in response to high osmolarity. The chain is Cytoplasmic trehalase from Salmonella choleraesuis (strain SC-B67).